We begin with the raw amino-acid sequence, 109 residues long: Cell division protein ZapA (109 aa).

Residues Glu22 to Arg99 adopt a coiled-coil conformation.

This sequence belongs to the ZapA family. Type 1 subfamily. As to quaternary structure, homodimer. Interacts with FtsZ.

It localises to the cytoplasm. In terms of biological role, activator of cell division through the inhibition of FtsZ GTPase activity, therefore promoting FtsZ assembly into bundles of protofilaments necessary for the formation of the division Z ring. It is recruited early at mid-cell but it is not essential for cell division. The sequence is that of Cell division protein ZapA from Erwinia tasmaniensis (strain DSM 17950 / CFBP 7177 / CIP 109463 / NCPPB 4357 / Et1/99).